The sequence spans 112 residues: uncharacterized protein (112 aa).

2 coiled-coil regions span residues 15-53 (AEKK…FFKF) and 86-103 (LDYE…TERK).

This is an uncharacterized protein from Aquifex aeolicus (strain VF5).